Reading from the N-terminus, the 136-residue chain is Secreted RxLR effector protein 15 (136 aa).

An N-terminal signal peptide occupies residues 1-22; the sequence is MRGHSALMMAVVTLAAVSSGAA. The short motif at 47 to 50 is the RxLR element; the sequence is RLLR.

The protein belongs to the RxLR effector family.

The protein localises to the secreted. Its subcellular location is the host nucleus. The protein resides in the host cytoplasm. In terms of biological role, effector that completely suppresses the host cell death induced by cell death-inducing proteins. The chain is Secreted RxLR effector protein 15 from Plasmopara viticola (Downy mildew of grapevine).